The sequence spans 86 residues: Muscarinic toxin MTX6 (86 aa).

The signal sequence occupies residues 1–21; the sequence is MKTLLLTLVVVTILCLDLGYT. 4 disulfide bridges follow: Cys-24–Cys-45, Cys-38–Cys-63, Cys-67–Cys-78, and Cys-79–Cys-84.

Belongs to the three-finger toxin family. Short-chain subfamily. Aminergic toxin sub-subfamily. As to quaternary structure, monomer. In terms of tissue distribution, expressed by the venom gland.

The protein localises to the secreted. Binds to the muscarinic acetylcholine receptor (CHRM). The chain is Muscarinic toxin MTX6 from Ophiophagus hannah (King cobra).